The following is a 142-amino-acid chain: Large ribosomal subunit protein uL11 (142 aa).

Belongs to the universal ribosomal protein uL11 family. In terms of assembly, part of the ribosomal stalk of the 50S ribosomal subunit. Interacts with L10 and the large rRNA to form the base of the stalk. L10 forms an elongated spine to which L12 dimers bind in a sequential fashion forming a multimeric L10(L12)X complex. Post-translationally, one or more lysine residues are methylated.

Its function is as follows. Forms part of the ribosomal stalk which helps the ribosome interact with GTP-bound translation factors. This chain is Large ribosomal subunit protein uL11, found in Rhodopseudomonas palustris (strain BisB5).